Reading from the N-terminus, the 601-residue chain is Elongation factor 4 (601 aa).

Positions K7–M189 constitute a tr-type G domain. Residues D19 to T24 and N136 to D139 contribute to the GTP site.

Belongs to the TRAFAC class translation factor GTPase superfamily. Classic translation factor GTPase family. LepA subfamily.

Its subcellular location is the cell inner membrane. It catalyses the reaction GTP + H2O = GDP + phosphate + H(+). Functionally, required for accurate and efficient protein synthesis under certain stress conditions. May act as a fidelity factor of the translation reaction, by catalyzing a one-codon backward translocation of tRNAs on improperly translocated ribosomes. Back-translocation proceeds from a post-translocation (POST) complex to a pre-translocation (PRE) complex, thus giving elongation factor G a second chance to translocate the tRNAs correctly. Binds to ribosomes in a GTP-dependent manner. In Xanthobacter autotrophicus (strain ATCC BAA-1158 / Py2), this protein is Elongation factor 4.